Reading from the N-terminus, the 404-residue chain is Sialidase (404 aa).

Positions 1–27 are cleaved as a signal peptide; it reads MKKFIKILKVLSMAIVLSACNINGIFA. Arg-55 contacts substrate. The Proton acceptor role is filled by Asp-80. BNR repeat units follow at residues 89–100, 158–169, and 226–237; these read AKSTDNGQTWDY, VYSDDNGETWSD, and IYSKDNGETWTM. Arg-263 contacts substrate. One copy of the BNR 4 repeat lies at 273 to 284; the sequence is YISYDMGSTWEV. Residue Tyr-365 is the Nucleophile of the active site.

The protein belongs to the glycosyl hydrolase 33 family. Post-translationally, it is possible that the sialidase is cleaved in front of a cysteine within the leader peptide, forming a glyceride thioether bond which links the protein to the membrane. A second proteolytic cleavage releases the mature extracellular protein.

It is found in the secreted. It catalyses the reaction Hydrolysis of alpha-(2-&gt;3)-, alpha-(2-&gt;6)-, alpha-(2-&gt;8)- glycosidic linkages of terminal sialic acid residues in oligosaccharides, glycoproteins, glycolipids, colominic acid and synthetic substrates.. Sialidases have been suggested to be pathogenic factors in microbial infections. The protein is Sialidase of Paraclostridium sordellii (Clostridium sordellii).